Here is a 264-residue protein sequence, read N- to C-terminus: Small ribosomal subunit protein uS2 (264 aa).

The disordered stretch occupies residues 228 to 264 (HEDVSAGPVEEQSDEAQAAEQGTEGDTAQLTSSQGRS). Polar residues predominate over residues 251–264 (EGDTAQLTSSQGRS).

Belongs to the universal ribosomal protein uS2 family.

The chain is Small ribosomal subunit protein uS2 from Deinococcus radiodurans (strain ATCC 13939 / DSM 20539 / JCM 16871 / CCUG 27074 / LMG 4051 / NBRC 15346 / NCIMB 9279 / VKM B-1422 / R1).